A 114-amino-acid chain; its full sequence is Large ribosomal subunit protein uL22 (114 aa).

It belongs to the universal ribosomal protein uL22 family. As to quaternary structure, part of the 50S ribosomal subunit.

Its function is as follows. This protein binds specifically to 23S rRNA; its binding is stimulated by other ribosomal proteins, e.g. L4, L17, and L20. It is important during the early stages of 50S assembly. It makes multiple contacts with different domains of the 23S rRNA in the assembled 50S subunit and ribosome. The globular domain of the protein is located near the polypeptide exit tunnel on the outside of the subunit, while an extended beta-hairpin is found that lines the wall of the exit tunnel in the center of the 70S ribosome. This is Large ribosomal subunit protein uL22 from Ehrlichia ruminantium (strain Gardel).